Here is a 290-residue protein sequence, read N- to C-terminus: Acetylglutamate kinase (290 aa).

Substrate is bound by residues 72–73 (GG), Arg94, and Asn187.

Belongs to the acetylglutamate kinase family. ArgB subfamily.

The protein resides in the plastid. Its subcellular location is the chloroplast. The enzyme catalyses N-acetyl-L-glutamate + ATP = N-acetyl-L-glutamyl 5-phosphate + ADP. The protein operates within amino-acid biosynthesis; L-arginine biosynthesis; N(2)-acetyl-L-ornithine from L-glutamate: step 2/4. In terms of biological role, catalyzes the ATP-dependent phosphorylation of N-acetyl-L-glutamate. In Cyanidioschyzon merolae (strain NIES-3377 / 10D) (Unicellular red alga), this protein is Acetylglutamate kinase.